We begin with the raw amino-acid sequence, 350 residues long: Holliday junction branch migration complex subunit RuvB (350 aa).

Residues 4–184 (ADRIVTASSR…FGIVQRLEFY (181 aa)) form a large ATPase domain (RuvB-L) region. Residues I23, R24, G65, K68, T69, T70, 131-133 (EDF), R174, Y184, and R221 each bind ATP. T69 lines the Mg(2+) pocket. A small ATPAse domain (RuvB-S) region spans residues 185-255 (STEDLATIVR…IADLALNMLD (71 aa)). The head domain (RuvB-H) stretch occupies residues 258–350 (ERGFDHQDRR…TPDLFEGDIV (93 aa)). Positions 294, 313, and 318 each coordinate DNA.

This sequence belongs to the RuvB family. As to quaternary structure, homohexamer. Forms an RuvA(8)-RuvB(12)-Holliday junction (HJ) complex. HJ DNA is sandwiched between 2 RuvA tetramers; dsDNA enters through RuvA and exits via RuvB. An RuvB hexamer assembles on each DNA strand where it exits the tetramer. Each RuvB hexamer is contacted by two RuvA subunits (via domain III) on 2 adjacent RuvB subunits; this complex drives branch migration. In the full resolvosome a probable DNA-RuvA(4)-RuvB(12)-RuvC(2) complex forms which resolves the HJ.

Its subcellular location is the cytoplasm. It carries out the reaction ATP + H2O = ADP + phosphate + H(+). Functionally, the RuvA-RuvB-RuvC complex processes Holliday junction (HJ) DNA during genetic recombination and DNA repair, while the RuvA-RuvB complex plays an important role in the rescue of blocked DNA replication forks via replication fork reversal (RFR). RuvA specifically binds to HJ cruciform DNA, conferring on it an open structure. The RuvB hexamer acts as an ATP-dependent pump, pulling dsDNA into and through the RuvAB complex. RuvB forms 2 homohexamers on either side of HJ DNA bound by 1 or 2 RuvA tetramers; 4 subunits per hexamer contact DNA at a time. Coordinated motions by a converter formed by DNA-disengaged RuvB subunits stimulates ATP hydrolysis and nucleotide exchange. Immobilization of the converter enables RuvB to convert the ATP-contained energy into a lever motion, pulling 2 nucleotides of DNA out of the RuvA tetramer per ATP hydrolyzed, thus driving DNA branch migration. The RuvB motors rotate together with the DNA substrate, which together with the progressing nucleotide cycle form the mechanistic basis for DNA recombination by continuous HJ branch migration. Branch migration allows RuvC to scan DNA until it finds its consensus sequence, where it cleaves and resolves cruciform DNA. The chain is Holliday junction branch migration complex subunit RuvB from Stutzerimonas stutzeri (strain A1501) (Pseudomonas stutzeri).